The following is a 2188-amino-acid chain: Phenolphthiocerol/phthiocerol polyketide synthase subunit C (2188 aa).

The 429-residue stretch at 34–462 (SEPIAVIGMG…GTNAHVVIEQ (429 aa)) folds into the Ketosynthase family 3 (KS3) domain. Residues cysteine 210, histidine 345, and histidine 384 each act as for beta-ketoacyl synthase activity in the active site. Residues 572-890 (VFVYSGRGSQ…NLNTTHTTHP (319 aa)) form an acyltransferase region. The active-site For malonyltransferase activity is the serine 660. Residues 928–1050 (HPLLGVGVTD…ATVARAEPLA (123 aa)) are N-terminal hotdog fold. A dehydratase region spans residues 928-1093 (HPLLGVGVTD…QQHGPAFQGI (166 aa)). One can recognise a PKS/mFAS DH domain in the interval 928–1223 (HPLLGVGVTD…MAVLGSGSGA (296 aa)). Histidine 959 serves as the catalytic Proton acceptor; for dehydratase activity. Positions 1067–1223 (EDQLDPDDLY…MAVLGSGSGA (157 aa)) are C-terminal hotdog fold. Aspartate 1129 acts as the Proton donor; for dehydratase activity in catalysis. Residues 1467 to 1778 (GRLDALNVHE…SGKHTGKIVI (312 aa)) are enoylreductase. The beta-ketoacyl reductase stretch occupies residues 1802–1981 (GGYLIVGGMG…GINWGPWADV (180 aa)). 1803–1848 (GYLIVGGMGGLGFVVARWLAEQGAGLIVLNGRSAPSDEVAAAIAEL) provides a ligand contact to NADP(+). Residues 2069–2145 (ERPGHLASAI…DLATALCERM (77 aa)) enclose the Carrier domain. Serine 2105 bears the O-(pantetheine 4'-phosphoryl)serine mark.

As to quaternary structure, homodimer. Requires NADP(+) as cofactor. The cofactor is pantetheine 4'-phosphate.

It carries out the reaction icosanoyl-[(phenol)carboxyphthiodiolenone synthase] + 2 (S)-methylmalonyl-CoA + 3 malonyl-CoA + 5 NADPH + 10 H(+) = C32-carboxyphthiodiolenone-[(phenol)carboxyphthiodiolenone synthase] + 5 CO2 + 5 NADP(+) + 5 CoA + 2 H2O. The enzyme catalyses docosanoyl-[(phenol)carboxyphthiodiolenone synthase] + 2 (S)-methylmalonyl-CoA + 3 malonyl-CoA + 5 NADPH + 10 H(+) = C34-carboxyphthiodiolenone-[(phenol)carboxyphthiodiolenone synthase] + 5 CO2 + 5 NADP(+) + 5 CoA + 2 H2O. It catalyses the reaction 17-(4-hydroxyphenyl)heptadecanoyl-[(phenol)carboxyphthiodiolenone synthase] + 2 (S)-methylmalonyl-CoA + 3 malonyl-CoA + 5 NADPH + 10 H(+) = C35-(phenol)carboxyphthiodiolenone-[(phenol)carboxyphthiodiolenone synthase] + 5 CO2 + 5 NADP(+) + 5 CoA + 2 H2O. The catalysed reaction is 19-(4-hydroxyphenyl)nonadecanoyl-[(phenol)carboxyphthiodiolenone synthase] + 2 (S)-methylmalonyl-CoA + 3 malonyl-CoA + 5 NADPH + 10 H(+) = C37-(phenol)carboxyphthiodiolenone-[(phenol)carboxyphthiodiolenone synthase] + 5 CO2 + 5 NADP(+) + 5 CoA + 2 H2O. Its pathway is lipid metabolism; fatty acid biosynthesis. Its function is as follows. Part of the PpsABCDE complex involved in the biosynthesis of the lipid core common to phthiocerols and phenolphthiocerols by successive additions of malonyl-CoA or methylmalonyl-CoA extender units. PpsA can accept as substrate the activated forms of either icosanoyl (C20), docosanoyl (C22) or lignoceroyl (C24) groups from FadD26, or a (4-hydroxyphenyl)-C17 or (4-hydroxyphenyl)-C19 fatty acyl from FadD29. PpsA initiates the biosynthesis and extends its substrate using a malonyl-CoA extender unit. The PpsB and PpsC proteins add the second and third malonyl-CoA extender units. PpsD adds an (R)-methylmalonyl unit and PpsE adds a second (R)-methylmalonyl unit. The incorporation of the methylmalonyl units results in formation of two branched methyl groups in the elongated product. This is Phenolphthiocerol/phthiocerol polyketide synthase subunit C (ppsC) from Mycobacterium bovis (strain ATCC BAA-935 / AF2122/97).